A 33-amino-acid chain; its full sequence is Protamine-1A (33 aa).

The disordered stretch occupies residues 1–33 (PRRRRSSSRPVRRRRRPRRVSRRRRRRGGRRRR).

As to expression, testis.

It localises to the nucleus. The protein resides in the chromosome. Protamines substitute for histones in the chromatin of sperm during the haploid phase of spermatogenesis. They compact sperm DNA into a highly condensed, stable and inactive complex. This is Protamine-1A from Oncorhynchus mykiss (Rainbow trout).